Consider the following 368-residue polypeptide: Xaa-Pro dipeptidase (368 aa).

Mn(2+)-binding residues include aspartate 223, aspartate 234, histidine 298, glutamate 327, and glutamate 341.

It belongs to the peptidase M24B family. Mn(2+) is required as a cofactor.

Its subcellular location is the cytoplasm. It catalyses the reaction Xaa-L-Pro dipeptide + H2O = an L-alpha-amino acid + L-proline. The polypeptide is Xaa-Pro dipeptidase (pepQ) (Lactobacillus delbrueckii subsp. lactis).